The sequence spans 506 residues: Cobyric acid synthase (506 aa).

Positions 251-448 (DITIAIVQLP…LHGLFDSDAF (198 aa)) constitute a GATase cobBQ-type domain. Cys332 acts as the Nucleophile in catalysis. Residue His440 is part of the active site.

The protein belongs to the CobB/CobQ family. CobQ subfamily.

It functions in the pathway cofactor biosynthesis; adenosylcobalamin biosynthesis. Catalyzes amidations at positions B, D, E, and G on adenosylcobyrinic A,C-diamide. NH(2) groups are provided by glutamine, and one molecule of ATP is hydrogenolyzed for each amidation. The protein is Cobyric acid synthase of Salmonella agona (strain SL483).